The sequence spans 389 residues: Protein MEI2-like 7 (389 aa).

Positions 170–184 (RRGMSKVYKPRKPQR) are enriched in basic residues. Positions 170-211 (RRGMSKVYKPRKPQRAGRERSPSPSPVFTTRPMSPTPPMQKL) are disordered. The region spanning 216-320 (TTVMVRNIPN…KIIDIRAARI (105 aa)) is the RRM domain. Positions 351–370 (PRDGSTAGAGAPSPPAVKTV) are disordered.

Functionally, probable RNA-binding protein that may play a role in growth regulation. This Oryza sativa subsp. japonica (Rice) protein is Protein MEI2-like 7 (OML7).